Reading from the N-terminus, the 948-residue chain is Bifunctional uridylyltransferase/uridylyl-removing enzyme (948 aa).

The uridylyltransferase stretch occupies residues Met-1–Pro-372. Residues Gly-373–Thr-728 are uridylyl-removing. The HD domain occupies Val-489–Leu-605. 2 consecutive ACT domains span residues Glu-729 to Ala-810 and Val-840 to Pro-921.

This sequence belongs to the GlnD family. The cofactor is Mg(2+).

It carries out the reaction [protein-PII]-L-tyrosine + UTP = [protein-PII]-uridylyl-L-tyrosine + diphosphate. The catalysed reaction is [protein-PII]-uridylyl-L-tyrosine + H2O = [protein-PII]-L-tyrosine + UMP + H(+). With respect to regulation, uridylyltransferase (UTase) activity is inhibited by glutamine, while glutamine activates uridylyl-removing (UR) activity. Modifies, by uridylylation and deuridylylation, the PII regulatory proteins (GlnB and homologs), in response to the nitrogen status of the cell that GlnD senses through the glutamine level. Under low glutamine levels, catalyzes the conversion of the PII proteins and UTP to PII-UMP and PPi, while under higher glutamine levels, GlnD hydrolyzes PII-UMP to PII and UMP (deuridylylation). Thus, controls uridylylation state and activity of the PII proteins, and plays an important role in the regulation of nitrogen fixation and metabolism. This Rhizobium tropici protein is Bifunctional uridylyltransferase/uridylyl-removing enzyme.